The following is a 347-amino-acid chain: Doublecortin domain-containing protein 2C (347 aa).

2 consecutive Doublecortin domains span residues lysine 16 to isoleucine 98 and arginine 136 to tryptophan 217. The segment at lysine 235–serine 260 is disordered. Basic and acidic residues predominate over residues lysine 241–leucine 251.

The protein resides in the cell projection. It is found in the cilium. The protein localises to the flagellum. It localises to the cytoplasm. In Mus musculus (Mouse), this protein is Doublecortin domain-containing protein 2C.